We begin with the raw amino-acid sequence, 2176 residues long: Nipped-B-like protein scc-2 (2176 aa).

Residues 1 to 25 (MDPNNLQNSLNGTGNPNFQPVQTNA) are compositionally biased toward polar residues. 7 disordered regions span residues 1-27 (MDPNNLQNSLNGTGNPNFQPVQTNAGG), 150-170 (PIPQHTIPPSTSNQFQQQIQS), 464-483 (SEATQSSSVTMNHHDVDEEG), 495-514 (MMSVGKAPKAGGGGGQNQRK), 523-551 (YDSLTDNFVPTDTGRRGRRRGRGSDDDED), 585-615 (QHFFGSQKKRRKEDRIRKDRSPTPEDVIESR), and 669-708 (DSLDTELKMPKNKKRRSGGDHHHKGDENSDESDEEEEMDE). A compositionally biased stretch (low complexity) spans 464 to 473 (SEATQSSSVT). Composition is skewed to basic and acidic residues over residues 597–615 (EDRIRKDRSPTPEDVIESR) and 685–695 (SGGDHHHKGDE). Residues 696-708 (NSDESDEEEEMDE) are compositionally biased toward acidic residues. HEAT repeat units lie at residues 1280–1312 (DTYLKHIVFGAGSETIVALRSKALKCLSSIIEA), 1320–1351 (EDVQQAVHTRMVDSHAQVRESAVELIGRFVLY), 1353–1388 (EEYVRKYYSQIAERILDTGVAVRKRVIRIMREICEK), 1393–1426 (EMIPDMLARMIRRVTDEEGVKKLVFETFTTLWFQ), 1692–1723 (EKVFITLEFFSRYHKGGLRQKALTAMGHFCAQ), 1803–1834 (QKYWKAVLESYVDADIQLRRAAVQVVWLTLNQ), and 1840–1871 (GASIPTLIAMTTDPVDVIRNRIDILLKEIDSK). The segment at 2149–2176 (ITAANDDYDEEEDGGEDSRGPIMEQMEH) is disordered. Residues 2154 to 2163 (DDYDEEEDGG) show a composition bias toward acidic residues.

The protein belongs to the SCC2/Nipped-B family. In terms of assembly, may heterodimerize with mau-2/SCC4 to form the cohesin loading complex.

It is found in the nucleus. Its subcellular location is the chromosome. Functionally, plays an important role in the loading of the cohesin complex on to meiotic chromosomes. Forms a heterodimeric complex (also known as cohesin loading complex) with mau-2/SCC4 which mediates the loading of the cohesin complex onto chromatin. Plays an essential role in cell division during embryonic development. Promotes normal chromosome organization during meiosis. Required for the assembly of the synaptonemal complex between homologous chromosomes to promote sister chromatid cohesion during meiosis. Required for chromosome segregation during mitosis and meiosis. Plays a role in DNA double-strand break (DSB) repair during meiotic recombination and promotes the assembly of the 9-1-1 cell-cycle checkpoint response complex which is required for inducing apoptosis in response to DNA damage, at DNA damage sites. The protein is Nipped-B-like protein scc-2 of Caenorhabditis elegans.